We begin with the raw amino-acid sequence, 340 residues long: Ferrochelatase (340 aa).

2 residues coordinate Fe cation: His189 and Glu292.

The protein belongs to the ferrochelatase family.

The protein localises to the cytoplasm. It catalyses the reaction heme b + 2 H(+) = protoporphyrin IX + Fe(2+). The protein operates within porphyrin-containing compound metabolism; protoheme biosynthesis; protoheme from protoporphyrin-IX: step 1/1. Catalyzes the ferrous insertion into protoporphyrin IX. The sequence is that of Ferrochelatase from Pseudomonas aeruginosa (strain LESB58).